We begin with the raw amino-acid sequence, 413 residues long: Azaphilone biosynthesis cluster protein M (413 aa).

The span at 123–138 shows a compositional bias: polar residues; that stretch reads STQPDQVQPNQPTPSF. Residues 123-145 are disordered; it reads STQPDQVQPNQPTPSFESAAGAS.

It functions in the pathway secondary metabolite biosynthesis. Part of the gene cluster that mediates the biosynthesis of azaterrilone A and other azaphilones, a class of fungal metabolites characterized by a highly oxygenated pyrano-quinone bicyclic core and exhibiting a broad range of bioactivities. The first step of the pathway begins with the non-reducing polyketide synthase tazA that assembles one acetyl-CoA starter unit, five malonyl-CoA units, and catalyzes a series of Claisen condensations, methylation, PT-mediated cyclization, and finally releases the first hexaketide precursor through the R-domain. The tazA product then undergoes reduction on its terminal ketone and the following pyran-ring formation by yet undetermined enzyme(s). Dehydration and enoyl reduction, possibly involving the trans-enoyl reductase tazE leads to the next intermediate. TazD is predicted as an acetyltransferase and might catalyze the acetylation steps leading to the synthesis of azaterrilone A. Azaterrilone A is not the final product of the taz pathway and both the highly reducing polyketide synthase tazB and the dual enzyme tazHJ catalyze late steps of the pathway, leading to the production of the 2 final stereoisomers that contain additional polyketide modification whose structures have still to be determined. In Aspergillus terreus (strain NIH 2624 / FGSC A1156), this protein is Azaphilone biosynthesis cluster protein M.